A 253-amino-acid polypeptide reads, in one-letter code: Triosephosphate isomerase (253 aa).

A substrate-binding site is contributed by 9 to 11; that stretch reads NWK. The active-site Electrophile is His-95. The Proton acceptor role is filled by Glu-167. Substrate contacts are provided by residues Gly-173, Ser-213, and 234–235; that span reads GG. A Phosphoserine modification is found at Ser-213.

This sequence belongs to the triosephosphate isomerase family. In terms of assembly, homodimer.

The protein localises to the cytoplasm. It catalyses the reaction D-glyceraldehyde 3-phosphate = dihydroxyacetone phosphate. It functions in the pathway carbohydrate biosynthesis; gluconeogenesis. Its pathway is carbohydrate degradation; glycolysis; D-glyceraldehyde 3-phosphate from glycerone phosphate: step 1/1. In terms of biological role, involved in the gluconeogenesis. Catalyzes stereospecifically the conversion of dihydroxyacetone phosphate (DHAP) to D-glyceraldehyde-3-phosphate (G3P). In Geobacillus kaustophilus (strain HTA426), this protein is Triosephosphate isomerase.